Reading from the N-terminus, the 256-residue chain is Thiazole synthase (256 aa).

Residue Lys95 is the Schiff-base intermediate with DXP of the active site. Residues Gly156, 182 to 183 (AG), and 204 to 205 (NT) each bind 1-deoxy-D-xylulose 5-phosphate.

Belongs to the ThiG family. In terms of assembly, homotetramer. Forms heterodimers with either ThiH or ThiS.

It localises to the cytoplasm. It catalyses the reaction [ThiS sulfur-carrier protein]-C-terminal-Gly-aminoethanethioate + 2-iminoacetate + 1-deoxy-D-xylulose 5-phosphate = [ThiS sulfur-carrier protein]-C-terminal Gly-Gly + 2-[(2R,5Z)-2-carboxy-4-methylthiazol-5(2H)-ylidene]ethyl phosphate + 2 H2O + H(+). It participates in cofactor biosynthesis; thiamine diphosphate biosynthesis. Catalyzes the rearrangement of 1-deoxy-D-xylulose 5-phosphate (DXP) to produce the thiazole phosphate moiety of thiamine. Sulfur is provided by the thiocarboxylate moiety of the carrier protein ThiS. In vitro, sulfur can be provided by H(2)S. In Klebsiella pneumoniae subsp. pneumoniae (strain ATCC 700721 / MGH 78578), this protein is Thiazole synthase.